Consider the following 425-residue polypeptide: Proline--tRNA ligase (425 aa).

This sequence belongs to the class-II aminoacyl-tRNA synthetase family. ProS type 2 subfamily. As to quaternary structure, homodimer.

The protein localises to the cytoplasm. It carries out the reaction tRNA(Pro) + L-proline + ATP = L-prolyl-tRNA(Pro) + AMP + diphosphate. Functionally, catalyzes the attachment of proline to tRNA(Pro) in a two-step reaction: proline is first activated by ATP to form Pro-AMP and then transferred to the acceptor end of tRNA(Pro). The polypeptide is Proline--tRNA ligase (Anaplasma marginale (strain St. Maries)).